The chain runs to 1007 residues: MVDRRSFGSITPPLQLDMEQLLSEAQHRWLRPTEICEILQNYHKFHIASESPTRPASGSLFLFDRKVLRYFRKDGHNWRKKKDGKTIREAHEKLKVGSIDVLHCYYAHGEANENFQRRCYWMLEQHLMHIVFVHYLEVKGNRTSIGMKENNSNSVNGTASVNIDSTASPTSTLSSLCEDADTGDSQQASSVLRPSPEPQTGNRYGWTPAPGMRNVSQVHGNRVRESDSQRLVDVRALDTVGNSLTRFHDQPYCNNLLTQMQPSNTDSMLVEENSEKGGRLKAEHIRNPLQTQFNWQDDTDLALFEQSAQDNFETFSSLLGSENLQPFGISYQAPPSNMDSEYMPVMKILRRSEDSLKKVDSFSKWAIKELGEMEDLQMQSSRGDIAWTTVECETAAAGISLSPSLSEDQRFTIVDFWPKSAKTDAEVEVMVIGTFLLSPQEVTKYNWSCMFGEVEVPAEILVDGVLCCHAPPHTAGHVPFYVTCSNRFACSEVREFDFLSGSTQKINATDVYGTYTNEASLQLRFEKMLAHRDFVHEHHIFEDVGDKRRQISKIMLLKEEKEYLLPGTYQRDSTKQEPKGQLFRELFEEELYIWLIHKVTEEGKGPNILDEDGQGILHFVAALGYDWAIKPVLAAGVNINFRDANGWSALHWAAFSGREETVAVLVSLGADAGALTDPSPELPLGKTAADLAYANGHRGISGFLAESSLTSYLEKLTVDSKENSPANSCGEKAVQTVSERTAAPMTYGDVPEKLSLKDSLTAVRNATQAADRLHQVFRMQSFQRKQLCDIGDDEKIDISDQLAVSFAASKTKNPGQGDVSLSCAATHIQKKYRGWKKRKEFLLIRQRIVKIQAHVRGHQVRKQYRTVIWSVGLLEKIILRWRRKGNGLRGFKRNAVAKTVEPEPPVSAICPRIPQEDEYDYLKEGRKQTEERLQKALTRVKSMVQYPEARDQYRRLLTVVEGFRENEASSSASINNKEEEAVNCEEDDFIDIESLLNDDTLMMSISP.

The segment at residues Met18 to Ser144 is a DNA-binding region (CG-1). The span at Lys148–Asp164 shows a compositional bias: polar residues. The interval Lys148 to Asp227 is disordered. Residues Ser165–Leu176 are compositionally biased toward low complexity. The segment covering Gly183–Asn202 has biased composition (polar residues). Positions Asp233 to Gly398 are transcription activation. ANK repeat units follow at residues Asp612–Phe641 and Asn645–Ala674. 2 IQ domains span residues Leu821 to Lys850 and Ile844 to Leu873. The tract at residues Trp869 to Phe891 is calmodulin-binding. Residues Gln915 to Met943 adopt a coiled-coil conformation. Position 942 is a phosphoserine (Ser942).

This sequence belongs to the CAMTA family. Expressed in roots, stems, leaves, pollen and siliques.

It localises to the nucleus. In terms of biological role, transcription activator that binds calmodulin in a calcium-dependent manner in vitro. Binds to the DNA consensus sequence 5'-[ACG]CGCG[GTC]-3'. Regulates transcriptional activity in response to calcium signals. Involved in freezing tolerance. Involved in freezing tolerance in association with CAMTA2 and CAMTA3. Contributes together with CAMTA2 and CAMTA3 to the positive regulation of the cold-induced expression of DREB1A/CBF3, DREB1B/CBF1 and DREB1C/CBF2. Involved in drought stress responses by regulating several drought-responsive genes. Involved in auxin signaling and responses to abiotic stresses. Activates the expression of the V-PPase proton pump AVP1 in pollen. In Arabidopsis thaliana (Mouse-ear cress), this protein is Calmodulin-binding transcription activator 1.